The chain runs to 234 residues: Triosephosphate isomerase (234 aa).

8 to 10 lines the substrate pocket; sequence NFK. The Electrophile role is filled by His90. Glu159 functions as the Proton acceptor in the catalytic mechanism. Substrate is bound by residues Gly165 and Ser197.

The protein belongs to the triosephosphate isomerase family. Homodimer.

It is found in the cytoplasm. The catalysed reaction is D-glyceraldehyde 3-phosphate = dihydroxyacetone phosphate. It participates in carbohydrate biosynthesis; gluconeogenesis. The protein operates within carbohydrate degradation; glycolysis; D-glyceraldehyde 3-phosphate from glycerone phosphate: step 1/1. In terms of biological role, involved in the gluconeogenesis. Catalyzes stereospecifically the conversion of dihydroxyacetone phosphate (DHAP) to D-glyceraldehyde-3-phosphate (G3P). In Helicobacter acinonychis (strain Sheeba), this protein is Triosephosphate isomerase.